The chain runs to 151 residues: MNKTTRVMPAHKHIALVAHDNYKPELLRWVKENKDALQGHFLYATGTTGRILSKETGLAIKSLLSGPMGGDQQLGALISEGKIDMMIFFWDPLNAVPHDPDVKALLRIATVWNVPVAMNRASAKFMISAPQMAEEVSIEIPDYDAYLAERV.

The MGS-like domain maps to 6 to 151 (RVMPAHKHIA…DYDAYLAERV (146 aa)). Substrate-binding positions include histidine 19, lysine 23, 45 to 48 (TGTT), and 65 to 66 (SG). Aspartate 71 (proton donor/acceptor) is an active-site residue. Residue histidine 98 coordinates substrate.

This sequence belongs to the methylglyoxal synthase family.

The enzyme catalyses dihydroxyacetone phosphate = methylglyoxal + phosphate. Functionally, catalyzes the formation of methylglyoxal from dihydroxyacetone phosphate. The chain is Methylglyoxal synthase from Aliivibrio fischeri (strain MJ11) (Vibrio fischeri).